The sequence spans 83 residues: Large ribosomal subunit protein bL27 (83 aa).

A disordered region spans residues 1–25 (MAHKKGQGASRNGRDSESKRLGLKV).

Belongs to the bacterial ribosomal protein bL27 family.

In Chlamydia trachomatis serovar L2 (strain ATCC VR-902B / DSM 19102 / 434/Bu), this protein is Large ribosomal subunit protein bL27.